The following is a 976-amino-acid chain: Vacuolar membrane protease (976 aa).

The Cytoplasmic portion of the chain corresponds to M1–K15. The helical transmembrane segment at T16–D36 threads the bilayer. The Vacuolar segment spans residues H37 to L359. Residues N96 and N121 are each glycosylated (N-linked (GlcNAc...) asparagine). The Zn(2+) site is built by H156 and D168. N189 carries an N-linked (GlcNAc...) asparagine glycan. The active-site Proton acceptor is E200. E201 contacts Zn(2+). Residues N212 and N217 are each glycosylated (N-linked (GlcNAc...) asparagine). The Zn(2+) site is built by E226 and H300. The chain crosses the membrane as a helical span at residues F360–I380. Over S381–W392 the chain is Cytoplasmic. Residues L393–F412 traverse the membrane as a helical segment. The Vacuolar portion of the chain corresponds to S413–Y428. The chain crosses the membrane as a helical span at residues F429–C449. Over S450–S461 the chain is Cytoplasmic. Residues L462–L482 traverse the membrane as a helical segment. The Vacuolar portion of the chain corresponds to Y483–S496. The helical transmembrane segment at I497–M517 threads the bilayer. Residues R518–Y627 lie on the Cytoplasmic side of the membrane. The disordered stretch occupies residues R528–E610. Residues N549–T558 show a composition bias toward polar residues. Over residues S559 to D570 the composition is skewed to low complexity. Over residues N582 to P601 the composition is skewed to basic and acidic residues. Residues A628–V648 form a helical membrane-spanning segment. Over D649 to D668 the chain is Vacuolar. A glycan (N-linked (GlcNAc...) asparagine) is linked at N656. The helical transmembrane segment at V669–Y689 threads the bilayer. The Cytoplasmic portion of the chain corresponds to K690–N692. The helical transmembrane segment at Y693 to V713 threads the bilayer. Over H714–L976 the chain is Vacuolar. Residues N768, N796, N811, N866, and N937 are each glycosylated (N-linked (GlcNAc...) asparagine).

It belongs to the peptidase M28 family. Zn(2+) serves as cofactor.

The protein localises to the vacuole membrane. May be involved in vacuolar sorting and osmoregulation. The protein is Vacuolar membrane protease of Saccharomyces cerevisiae (strain YJM789) (Baker's yeast).